We begin with the raw amino-acid sequence, 118 residues long: Large ribosomal subunit protein bL20 (118 aa).

Belongs to the bacterial ribosomal protein bL20 family.

Binds directly to 23S ribosomal RNA and is necessary for the in vitro assembly process of the 50S ribosomal subunit. It is not involved in the protein synthesizing functions of that subunit. In Sulfurimonas denitrificans (strain ATCC 33889 / DSM 1251) (Thiomicrospira denitrificans (strain ATCC 33889 / DSM 1251)), this protein is Large ribosomal subunit protein bL20.